Consider the following 143-residue polypeptide: Nucleoside diphosphate kinase (143 aa).

The ATP site is built by Lys-10, Phe-58, Arg-86, Thr-92, Arg-103, and Asn-113. His-116 (pros-phosphohistidine intermediate) is an active-site residue.

It belongs to the NDK family. As to quaternary structure, homotetramer. Mg(2+) serves as cofactor.

The protein localises to the cytoplasm. The catalysed reaction is a 2'-deoxyribonucleoside 5'-diphosphate + ATP = a 2'-deoxyribonucleoside 5'-triphosphate + ADP. It catalyses the reaction a ribonucleoside 5'-diphosphate + ATP = a ribonucleoside 5'-triphosphate + ADP. Functionally, major role in the synthesis of nucleoside triphosphates other than ATP. The ATP gamma phosphate is transferred to the NDP beta phosphate via a ping-pong mechanism, using a phosphorylated active-site intermediate. This Ehrlichia ruminantium (strain Welgevonden) protein is Nucleoside diphosphate kinase.